A 359-amino-acid polypeptide reads, in one-letter code: Insulin gene enhancer protein ISL-2 (359 aa).

2 consecutive LIM zinc-binding domains span residues 25–86 (AMCV…RLFG) and 87–149 (IKCA…LLER). A disordered region spans residues 151 to 190 (AAGSPRSPGPLPGARGLHLPDAGSGRQPSLRTHVHKQAEK). 2 positions are modified to phosphoserine: Ser154 and Ser157. The homeobox DNA-binding region spans 191 to 250 (TTRVRTVLNEKQLHTLRTCYAANPRPDALMKEQLVEMTGLSPRVIRVWFQNKRCKDKKKS). Residues 272–301 (GTPLVAGSPIRHENAVQGSAVEVQTYQPPW) form an LIM-binding domain (LID) region. Ser279 is modified (phosphoserine). The span at 326–336 (ESGSLGNSSGS) shows a compositional bias: low complexity. The interval 326-359 (ESGSLGNSSGSDVTSLSSQLPDTPNSMVPSPVET) is disordered. Over residues 337–359 (DVTSLSSQLPDTPNSMVPSPVET) the composition is skewed to polar residues.

In terms of assembly, interacts with LHX4.

It is found in the nucleus. Transcriptional factor that defines subclasses of motoneurons that segregate into columns in the spinal cord and select distinct axon pathways. The sequence is that of Insulin gene enhancer protein ISL-2 (Isl2) from Mus musculus (Mouse).